A 398-amino-acid chain; its full sequence is Aldo-keto reductase ausK (398 aa).

NADP(+) is bound at residue D76. Y81 serves as the catalytic Proton donor. H156 is a substrate binding site. Residues 186–187, Q212, 241–251, and 317–325 each bind NADP(+); these read CN, DALGSGKFQSR, and RKIQHLHDN.

The protein belongs to the aldo/keto reductase family. Aldo/keto reductase 2 subfamily. In terms of assembly, homodimer.

The protein operates within secondary metabolite biosynthesis; terpenoid biosynthesis. Its function is as follows. Aldo-keto reductase; part of the gene cluster B that mediates the biosynthesis of austinol and dehydroaustinol, two fungal meroterpenoids. The first step of the pathway is the synthesis of 3,5-dimethylorsellinic acid by the polyketide synthase ausA. 3,5-dimethylorsellinic acid is then prenylated by the polyprenyl transferase ausN. Further epoxidation by the FAD-dependent monooxygenase ausM and cyclization by the probable terpene cyclase ausL lead to the formation of protoaustinoid A. Protoaustinoid A is then oxidized to spiro-lactone preaustinoid A3 by the combined action of the FAD-binding monooxygenases ausB and ausC, and the dioxygenase ausE. Acid-catalyzed keto-rearrangement and ring contraction of the tetraketide portion of preaustinoid A3 by ausJ lead to the formation of preaustinoid A4. The aldo-keto reductase ausK, with the help of ausH, is involved in the next step by transforming preaustinoid A4 into isoaustinone which is in turn hydroxylated by the P450 monooxygenase ausI to form austinolide. Finally, the cytochrome P450 monooxygenase ausG modifies austinolide to austinol. Austinol can be further modified to dehydroaustinol which forms a diffusible complex with diorcinol that initiates conidiation. Due to genetic rearrangements of the clusters and the subsequent loss of some enzymes, the end products of the Emericella nidulans austinoid biosynthesis clusters are austinol and dehydroaustinol, even if additional enzymes, such as the O-acetyltransferase ausQ and the cytochrome P450 monooxygenase ausR are still functional. The protein is Aldo-keto reductase ausK of Emericella nidulans (strain FGSC A4 / ATCC 38163 / CBS 112.46 / NRRL 194 / M139) (Aspergillus nidulans).